The chain runs to 541 residues: Chaperonin GroEL (541 aa).

ATP is bound by residues 29 to 32 (TIGP), 86 to 90 (DGTTT), Gly-413, 478 to 480 (NAA), and Asp-494.

The protein belongs to the chaperonin (HSP60) family. As to quaternary structure, forms a cylinder of 14 subunits composed of two heptameric rings stacked back-to-back. Interacts with the co-chaperonin GroES.

It is found in the cytoplasm. The enzyme catalyses ATP + H2O + a folded polypeptide = ADP + phosphate + an unfolded polypeptide.. Together with its co-chaperonin GroES, plays an essential role in assisting protein folding. The GroEL-GroES system forms a nano-cage that allows encapsulation of the non-native substrate proteins and provides a physical environment optimized to promote and accelerate protein folding. The chain is Chaperonin GroEL from Oenococcus oeni (strain ATCC BAA-331 / PSU-1).